The sequence spans 191 residues: Ankyrin repeat domain-containing protein 22 (191 aa).

ANK repeat units lie at residues 39 to 68, 72 to 100, 101 to 130, and 134 to 163; these read NGDT…DVNL, KERT…MPVL, LIGY…EVNA, and DGYT…DPMI.

In Mus musculus (Mouse), this protein is Ankyrin repeat domain-containing protein 22 (Ankrd22).